A 248-amino-acid chain; its full sequence is Type III pantothenate kinase (248 aa).

6 to 13 is an ATP binding site; the sequence is ELGNSQLK. Substrate-binding positions include Tyr94 and 101–104; that span reads GVDR. Asp103 acts as the Proton acceptor in catalysis. Asp123 contributes to the K(+) binding site. Thr126 provides a ligand contact to ATP. Residue Thr179 coordinates substrate.

It belongs to the type III pantothenate kinase family. Homodimer. The cofactor is NH4(+). It depends on K(+) as a cofactor.

The protein resides in the cytoplasm. It carries out the reaction (R)-pantothenate + ATP = (R)-4'-phosphopantothenate + ADP + H(+). It functions in the pathway cofactor biosynthesis; coenzyme A biosynthesis; CoA from (R)-pantothenate: step 1/5. In terms of biological role, catalyzes the phosphorylation of pantothenate (Pan), the first step in CoA biosynthesis. In Hydrogenovibrio crunogenus (strain DSM 25203 / XCL-2) (Thiomicrospira crunogena), this protein is Type III pantothenate kinase.